Here is a 509-residue protein sequence, read N- to C-terminus: MKRALISVSDKNGIVPFAEKLVELGVEIISTGGTKAAFEQAGVPVTGIEDVTEFPEMLDGRVKTLHPAIHGGLLARRDTAEHMEAIAAHDIKPIDLVVVNLYPFQETIQKSGVTLEEAIENIDIGGPSMLRSAAKNYAAVTVVVDTADYDTVLTELEEHGATTFETRQRLAAKVFRHTAAYDALIAEYLTNITGETFPEKVTLTYNRKQVLRYGENPHQDAAFYTEPGTVENSISSAKQLHGKELSYNNIRDADAALKIASEFTEPVAVAVKHMNPCGVGVGENIEEAYLKAYEADETSIFGGIVALNKEVDAKTAEHMSKIFLEIIIAPSFSEEAFAILAKKKNIRLLTVPFAGSVKGFEKTSVNGGLLIQASDSVIEDTASYEVVTEKQPTEAEMKALIAQWKIVKHVKSNAIVVGSDKQTLGIGAGQMNRIGSALIALEQAGEKAKGAVLASDAFFPMDDTVEAAAKAGITAIIQPGGSIKDKESIEMANKYGISMVLTHVRHFKH.

In terms of domain architecture, MGS-like spans methionine 1–valine 144.

This sequence belongs to the PurH family.

The enzyme catalyses (6R)-10-formyltetrahydrofolate + 5-amino-1-(5-phospho-beta-D-ribosyl)imidazole-4-carboxamide = 5-formamido-1-(5-phospho-D-ribosyl)imidazole-4-carboxamide + (6S)-5,6,7,8-tetrahydrofolate. The catalysed reaction is IMP + H2O = 5-formamido-1-(5-phospho-D-ribosyl)imidazole-4-carboxamide. The protein operates within purine metabolism; IMP biosynthesis via de novo pathway; 5-formamido-1-(5-phospho-D-ribosyl)imidazole-4-carboxamide from 5-amino-1-(5-phospho-D-ribosyl)imidazole-4-carboxamide (10-formyl THF route): step 1/1. It participates in purine metabolism; IMP biosynthesis via de novo pathway; IMP from 5-formamido-1-(5-phospho-D-ribosyl)imidazole-4-carboxamide: step 1/1. The chain is Bifunctional purine biosynthesis protein PurH from Listeria monocytogenes serotype 4b (strain CLIP80459).